A 607-amino-acid polypeptide reads, in one-letter code: Threonine--tRNA ligase (607 aa).

The editing domain stretch occupies residues 1-143; sequence MRVLYIHAER…SFKPEEARVA (143 aa). Catalytic regions lie at residues 193–489 and 194–489; these read PRYL…PRLP and RYLD…PRLP. Zn(2+)-binding residues include cysteine 286, histidine 337, and histidine 458.

Belongs to the class-II aminoacyl-tRNA synthetase family. As to quaternary structure, homodimer. The cofactor is Zn(2+).

The protein resides in the cytoplasm. The catalysed reaction is tRNA(Thr) + L-threonine + ATP = L-threonyl-tRNA(Thr) + AMP + diphosphate + H(+). In terms of biological role, catalyzes the attachment of threonine to tRNA(Thr) in a two-step reaction: L-threonine is first activated by ATP to form Thr-AMP and then transferred to the acceptor end of tRNA(Thr). Also edits incorrectly charged L-seryl-tRNA(Thr). This Pyrobaculum calidifontis (strain DSM 21063 / JCM 11548 / VA1) protein is Threonine--tRNA ligase.